The primary structure comprises 313 residues: 2,3-dihydroxyphenylpropionate/2,3-dihydroxicinnamic acid 1,2-dioxygenase (313 aa).

Histidine 115 functions as the Proton donor in the catalytic mechanism. Histidine 179 (proton acceptor) is an active-site residue.

It belongs to the LigB/MhpB extradiol dioxygenase family. As to quaternary structure, homotetramer. It depends on Fe(2+) as a cofactor.

It carries out the reaction 3-(2,3-dihydroxyphenyl)propanoate + O2 = (2Z,4E)-2-hydroxy-6-oxonona-2,4-dienedioate + H(+). The enzyme catalyses (2E)-3-(2,3-dihydroxyphenyl)prop-2-enoate + O2 = (2Z,4E,7E)-2-hydroxy-6-oxonona-2,4,7-trienedioate + H(+). The protein operates within aromatic compound metabolism; 3-phenylpropanoate degradation. Catalyzes the non-heme iron(II)-dependent oxidative cleavage of 2,3-dihydroxyphenylpropionic acid and 2,3-dihydroxicinnamic acid into 2-hydroxy-6-ketononadienedioate and 2-hydroxy-6-ketononatrienedioate, respectively. The polypeptide is 2,3-dihydroxyphenylpropionate/2,3-dihydroxicinnamic acid 1,2-dioxygenase (Mycobacterium ulcerans (strain Agy99)).